Reading from the N-terminus, the 140-residue chain is MTIQYTFSMIKPDAIKRNKIGQVNAYLENGGLKIVAQKMRFLTKYEAECFYDEHRARTFFNSLVEYITSGAVVLQVLKGEDAIILNRTIMGATNPAEAEAGTIRKDLGESIEANSIHGSDSENSAKREIAFFFNKSEIIE.

Residues Lys11, Phe59, Arg87, Thr93, Arg104, and Asn114 each coordinate ATP. The active-site Pros-phosphohistidine intermediate is His117.

The protein belongs to the NDK family. As to quaternary structure, homotetramer. Mg(2+) serves as cofactor.

It is found in the cytoplasm. It catalyses the reaction a 2'-deoxyribonucleoside 5'-diphosphate + ATP = a 2'-deoxyribonucleoside 5'-triphosphate + ADP. The catalysed reaction is a ribonucleoside 5'-diphosphate + ATP = a ribonucleoside 5'-triphosphate + ADP. Functionally, major role in the synthesis of nucleoside triphosphates other than ATP. The ATP gamma phosphate is transferred to the NDP beta phosphate via a ping-pong mechanism, using a phosphorylated active-site intermediate. This Rickettsia akari (strain Hartford) protein is Nucleoside diphosphate kinase.